The following is a 740-amino-acid chain: ATP-dependent RNA helicase DDX1 (740 aa).

The interval 1 to 295 (MAAFSEMGVM…APKALIVEPS (295 aa)) is necessary for interaction with HNRNPK. Residues 1–448 (MAAFSEMGVM…DTVHHVVVPV (448 aa)) are interaction with dsRNA. A necessary for interaction with RELA region spans residues 1–525 (MAAFSEMGVM…KIDCDNLEQY (525 aa)). A Helicase ATP-binding domain is found at 2 to 428 (AAFSEMGVMP…SEKIMHFPTW (427 aa)). 46–53 (AETGSGKT) lines the ATP pocket. The 178-residue stretch at 70-247 (DQQEGKKGKT…LKFNFGEEEF (178 aa)) folds into the B30.2/SPRY domain. 2 positions are modified to N6-acetyllysine: K239 and K268. K281 carries the N6-acetyllysine; alternate modification. Residue K281 forms a Glycyl lysine isopeptide (Lys-Gly) (interchain with G-Cter in SUMO2); alternate linkage. Residues 370–373 (DEAD) carry the DEAD box motif. Phosphoserine is present on S481. The Helicase C-terminal domain occupies 493–681 (KGEYAVRAIK…QVEPDIKVPV (189 aa)). Residues 525 to 740 (YFMQQGGGPD…YLPNQLFRTF (216 aa)) form a necessary for interaction with HNRNPK region.

The protein belongs to the DEAD box helicase family. DDX1 subfamily. In terms of assembly, found in a multi-helicase-TICAM1 complex at least composed of DHX36, DDX1, DDX21 and TICAM1; this complex exists in resting cells with or without poly(I:C) RNA ligand stimulation. Interacts with DHX36. Interacts (via B30.2/SPRY domain) with DDX21 (via N-terminus); this interaction serves as bridges to TICAM1. Interacts with FAM98A (via N- and C-terminus). Interacts with PHF5A (via C-terminus). Interacts with MBNL1. Interacts with CSTF2. Interacts with HNRNPK. Interacts with ATM. Interacts with RELA (via C-terminus). Component of the tRNA-splicing ligase complex. Interacts with PQBP1. Interacts with ERCC6. Phosphorylated by ATM kinase; phosphorylation is increased in response to ionizing radiation (IR).

The protein resides in the nucleus. Its subcellular location is the cytoplasm. The protein localises to the cytoplasmic granule. It localises to the cytosol. It is found in the mitochondrion. The catalysed reaction is ATP + H2O = ADP + phosphate + H(+). In terms of biological role, acts as an ATP-dependent RNA helicase, able to unwind both RNA-RNA and RNA-DNA duplexes. Possesses 5' single-stranded RNA overhang nuclease activity. Possesses ATPase activity on various RNA, but not DNA polynucleotides. May play a role in RNA clearance at DNA double-strand breaks (DSBs), thereby facilitating the template-guided repair of transcriptionally active regions of the genome. Together with RELA, acts as a coactivator to enhance NF-kappa-B-mediated transcriptional activation. Acts as a positive transcriptional regulator of cyclin CCND2 expression. Binds to the cyclin CCND2 promoter region. Associates with chromatin at the NF-kappa-B promoter region via association with RELA. Binds to poly(A) RNA. May be involved in 3'-end cleavage and polyadenylation of pre-mRNAs. Component of the tRNA-splicing ligase complex required to facilitate the enzymatic turnover of catalytic subunit RTCB: together with archease (ZBTB8OS), acts by facilitating the guanylylation of RTCB, a key intermediate step in tRNA ligation. Component of a multi-helicase-TICAM1 complex that acts as a cytoplasmic sensor of viral double-stranded RNA (dsRNA) and plays a role in the activation of a cascade of antiviral responses including the induction of pro-inflammatory cytokines via the adapter molecule TICAM1. Specifically binds (via helicase ATP-binding domain) on both short and long poly(I:C) dsRNA. The protein is ATP-dependent RNA helicase DDX1 (DDX1) of Macaca fascicularis (Crab-eating macaque).